Consider the following 299-residue polypeptide: Deoxyhypusine hydroxylase (299 aa).

HEAT-like PBS-type repeat units lie at residues L54–D80, V87–D113, D174–A200, F205–S231, and V238–D264. Fe cation-binding residues include H56, H89, and E90. Fe cation is bound by residues H207, H240, and E241.

It belongs to the deoxyhypusine hydroxylase family. The cofactor is Fe(2+).

The enzyme catalyses [eIF5A protein]-deoxyhypusine + AH2 + O2 = [eIF5A protein]-hypusine + A + H2O. Its pathway is protein modification; eIF5A hypusination. Catalyzes the hydroxylation of the N(6)-(4-aminobutyl)-L-lysine intermediate produced by deoxyhypusine synthase/DHPS on a critical lysine of the eukaryotic translation initiation factor 5A/eIF-5A. This is the second step of the post-translational modification of that lysine into an unusual amino acid residue named hypusine. Hypusination is unique to mature eIF-5A factor and is essential for its function. This Gallus gallus (Chicken) protein is Deoxyhypusine hydroxylase.